A 168-amino-acid chain; its full sequence is Protein YciE (168 aa).

The chain is Protein YciE (yciE) from Escherichia coli (strain K12).